A 49-amino-acid polypeptide reads, in one-letter code: uncharacterized protein (49 aa).

This is an uncharacterized protein from Bacillus subtilis (strain 168).